A 298-amino-acid polypeptide reads, in one-letter code: ATP synthase gamma chain (298 aa).

This sequence belongs to the ATPase gamma chain family. In terms of assembly, F-type ATPases have 2 components, CF(1) - the catalytic core - and CF(0) - the membrane proton channel. CF(1) has five subunits: alpha(3), beta(3), gamma(1), delta(1), epsilon(1). CF(0) has three main subunits: a, b and c.

Its subcellular location is the cell inner membrane. Its function is as follows. Produces ATP from ADP in the presence of a proton gradient across the membrane. The gamma chain is believed to be important in regulating ATPase activity and the flow of protons through the CF(0) complex. In Francisella tularensis subsp. mediasiatica (strain FSC147), this protein is ATP synthase gamma chain.